Reading from the N-terminus, the 132-residue chain is Small ribosomal subunit protein uS8 (132 aa).

Belongs to the universal ribosomal protein uS8 family. As to quaternary structure, part of the 30S ribosomal subunit. Contacts proteins S5 and S12.

In terms of biological role, one of the primary rRNA binding proteins, it binds directly to 16S rRNA central domain where it helps coordinate assembly of the platform of the 30S subunit. This Baumannia cicadellinicola subsp. Homalodisca coagulata protein is Small ribosomal subunit protein uS8.